The primary structure comprises 148 residues: SsrA-binding protein (148 aa).

Positions 124-148 (QFDKRETEKDRDWQREKARLMREKA) are disordered.

It belongs to the SmpB family.

The protein localises to the cytoplasm. In terms of biological role, required for rescue of stalled ribosomes mediated by trans-translation. Binds to transfer-messenger RNA (tmRNA), required for stable association of tmRNA with ribosomes. tmRNA and SmpB together mimic tRNA shape, replacing the anticodon stem-loop with SmpB. tmRNA is encoded by the ssrA gene; the 2 termini fold to resemble tRNA(Ala) and it encodes a 'tag peptide', a short internal open reading frame. During trans-translation Ala-aminoacylated tmRNA acts like a tRNA, entering the A-site of stalled ribosomes, displacing the stalled mRNA. The ribosome then switches to translate the ORF on the tmRNA; the nascent peptide is terminated with the 'tag peptide' encoded by the tmRNA and targeted for degradation. The ribosome is freed to recommence translation, which seems to be the essential function of trans-translation. In Ralstonia pickettii (strain 12J), this protein is SsrA-binding protein.